The sequence spans 72 residues: Translation initiation factor IF-1 (72 aa).

The 72-residue stretch at 1–72 folds into the S1-like domain; that stretch reads MAKEESIKMN…SKGRITYRAR (72 aa).

This sequence belongs to the IF-1 family. In terms of assembly, component of the 30S ribosomal translation pre-initiation complex which assembles on the 30S ribosome in the order IF-2 and IF-3, IF-1 and N-formylmethionyl-tRNA(fMet); mRNA recruitment can occur at any time during PIC assembly.

Its subcellular location is the cytoplasm. Functionally, one of the essential components for the initiation of protein synthesis. Stabilizes the binding of IF-2 and IF-3 on the 30S subunit to which N-formylmethionyl-tRNA(fMet) subsequently binds. Helps modulate mRNA selection, yielding the 30S pre-initiation complex (PIC). Upon addition of the 50S ribosomal subunit IF-1, IF-2 and IF-3 are released leaving the mature 70S translation initiation complex. The protein is Translation initiation factor IF-1 of Alkalilimnicola ehrlichii (strain ATCC BAA-1101 / DSM 17681 / MLHE-1).